Reading from the N-terminus, the 153-residue chain is Myosin regulatory light chain, smooth muscle (153 aa).

EF-hand domains lie at 12 to 47, 81 to 116, and 117 to 152; these read SQIQ…LGRG, DPEE…QADR, and FSQS…GQEE. Residues aspartate 25, asparagine 27, aspartate 29, and aspartate 36 each contribute to the Ca(2+) site.

Its function is as follows. In molluscan muscle, calcium regulation is associated with myosin rather than with actin. Muscle myosin contains two types of light chains: the catalytic light chain, essential for ATPase activity, and the regulatory light chain, a calcium-binding protein responsible for Ca(2+) dependent binding and Ca(2+) dependent Mg-ATPase activity. The polypeptide is Myosin regulatory light chain, smooth muscle (Halocynthia roretzi (Sea squirt)).